We begin with the raw amino-acid sequence, 469 residues long: Uronate isomerase (469 aa).

This sequence belongs to the metallo-dependent hydrolases superfamily. Uronate isomerase family.

The enzyme catalyses D-glucuronate = D-fructuronate. It catalyses the reaction aldehydo-D-galacturonate = keto-D-tagaturonate. It participates in carbohydrate metabolism; pentose and glucuronate interconversion. The polypeptide is Uronate isomerase (Pectobacterium carotovorum subsp. carotovorum (strain PC1)).